A 734-amino-acid chain; its full sequence is MALRFPRFSQGLAQDPTTRRIWFGIATAHDFESHDDITEERLYQNIFASHFGQLAIIFLWTSGNLFHVAWQGNFESWVQDPLHVRPIAHAIWDPHFGQPAVEAFTRGGALGPVNIAYSGVYQWWYTIGLRTNEDLYTGALFLLFLSAISLIAGWLHLQPKWKPSVSWFKNAESRLNHHLSGLFGVSSLAWTGHLVHVAIPGARGEYVRWNNFLDVLPHPQGLAPLFTGQWNLYAQNPDSSSHLFGTSQGAGTAILTLLGGFHPQTQSLWLTDIAHHHLAIAFIFLVAGHMYRTNFGIGHSMKDLLEAHIPPGGRLGRGHKGLYDTINNSIHFQLGLALASLGVITSLVAQHMYSLPAYAFIAQDFTTQAALYTHHQYIAGFIMTGAFAHGAIFFIRDYNPEQNEDNVLARMLDHKEAIISHLSWASLFLGFHTLGLYVHNDVMLAFGTPEKQILIEPIFAQWIQSAHGKTSYGFDVLLSSTNGPAFNAGRSIWLPGWLNAVNENSNSLFLTIGPGDFLVHHAIALGLHTTTLILVKGALDARGSKLMPDKKDFGYSFPCDGPGRGGTCDISAWDAFYLAVFWMLNTIGWVTFYWHWKHITLWQGNVSQFNESSTYLMGWLRDYLWLNSSQLINGYNPFGTNSLSVWAWMFLFGHLVWATGFMFLISWRGYWQELIETLAWAHERTPLANLIRWRDKPVALSIVQARLVGLAHFSVGYIFTYAAFLIASTSGKFG.

The next 8 membrane-spanning stretches (helical) occupy residues 46–69 (IFAS…FHVA), 135–158 (LYTG…LHLQ), 175–199 (LNHH…HVAI), 273–291 (IAHH…GHMY), 330–353 (IHFQ…QHMY), 369–395 (AALY…IFFI), 417–439 (AIIS…LYVH), and 517–535 (FLVH…LILV). The [4Fe-4S] cluster site is built by Cys559 and Cys568. Helical transmembrane passes span 575-596 (AFYL…YWHW) and 643-665 (LSVW…MFLI). Chlorophyll a-binding residues include His654, Met662, and Tyr670. Residue Trp671 participates in phylloquinone binding. Residues 707–727 (LVGLAHFSVGYIFTYAAFLIA) form a helical membrane-spanning segment.

Belongs to the PsaA/PsaB family. In terms of assembly, the PsaA/B heterodimer binds the P700 chlorophyll special pair and subsequent electron acceptors. PSI consists of a core antenna complex that captures photons, and an electron transfer chain that converts photonic excitation into a charge separation. The eukaryotic PSI reaction center is composed of at least 11 subunits. P700 is a chlorophyll a/chlorophyll a' dimer, A0 is one or more chlorophyll a, A1 is one or both phylloquinones and FX is a shared 4Fe-4S iron-sulfur center. serves as cofactor.

The protein resides in the plastid. Its subcellular location is the chloroplast thylakoid membrane. The catalysed reaction is reduced [plastocyanin] + hnu + oxidized [2Fe-2S]-[ferredoxin] = oxidized [plastocyanin] + reduced [2Fe-2S]-[ferredoxin]. In terms of biological role, psaA and PsaB bind P700, the primary electron donor of photosystem I (PSI), as well as the electron acceptors A0, A1 and FX. PSI is a plastocyanin-ferredoxin oxidoreductase, converting photonic excitation into a charge separation, which transfers an electron from the donor P700 chlorophyll pair to the spectroscopically characterized acceptors A0, A1, FX, FA and FB in turn. Oxidized P700 is reduced on the lumenal side of the thylakoid membrane by plastocyanin. The chain is Photosystem I P700 chlorophyll a apoprotein A2 from Calycanthus floridus var. glaucus (Eastern sweetshrub).